The following is a 202-amino-acid chain: Small ribosomal subunit protein uS4c (202 aa).

Positions 90–153 (MRLDNIIFRL…KSEAIISKNI (64 aa)) constitute an S4 RNA-binding domain.

It belongs to the universal ribosomal protein uS4 family. As to quaternary structure, part of the 30S ribosomal subunit. Contacts protein S5. The interaction surface between S4 and S5 is involved in control of translational fidelity.

It is found in the plastid. The protein resides in the chloroplast. Its function is as follows. One of the primary rRNA binding proteins, it binds directly to 16S rRNA where it nucleates assembly of the body of the 30S subunit. Functionally, with S5 and S12 plays an important role in translational accuracy. The sequence is that of Small ribosomal subunit protein uS4c (rps4) from Leucodon sciuroides (Moss).